The sequence spans 37 residues: Large ribosomal subunit protein bL36 (37 aa).

This sequence belongs to the bacterial ribosomal protein bL36 family.

This chain is Large ribosomal subunit protein bL36, found in Mycoplasmopsis synoviae (strain 53) (Mycoplasma synoviae).